A 262-amino-acid polypeptide reads, in one-letter code: PsbP domain-containing protein 6, chloroplastic (262 aa).

Cys-128 and Cys-132 are disulfide-bonded.

It belongs to the PsbP family.

It is found in the plastid. Its subcellular location is the chloroplast thylakoid lumen. In terms of biological role, may be involved in the redox regulation of photosystem II. The polypeptide is PsbP domain-containing protein 6, chloroplastic (PPD6) (Arabidopsis thaliana (Mouse-ear cress)).